A 251-amino-acid chain; its full sequence is CDP-diacylglycerol pyrophosphatase (251 aa).

The chain crosses the membrane as a helical span at residues 5–25; it reads GYFLLAVIVIVAAAGVGYWKF.

It belongs to the Cdh family.

Its subcellular location is the cell inner membrane. The catalysed reaction is a CDP-1,2-diacyl-sn-glycerol + H2O = a 1,2-diacyl-sn-glycero-3-phosphate + CMP + 2 H(+). Its pathway is phospholipid metabolism; CDP-diacylglycerol degradation; phosphatidate from CDP-diacylglycerol: step 1/1. The polypeptide is CDP-diacylglycerol pyrophosphatase (Salmonella typhi).